A 244-amino-acid chain; its full sequence is Transcriptional activator protein CarR (244 aa).

The region spanning 162–227 (DNSRNALLSP…HAITKALELN (66 aa)) is the HTH luxR-type domain. The segment at residues 186 to 205 (YKEVSRILGISEVTVKFHIN) is a DNA-binding region (H-T-H motif).

The protein belongs to the autoinducer-regulated transcriptional regulatory protein family.

Its function is as follows. Functions as an OHLL responsive transcriptional regulator which acts in the control of the biosynthesis of carbapenem antibiotics. The protein is Transcriptional activator protein CarR (carR) of Pectobacterium carotovorum subsp. carotovorum (Erwinia carotovora subsp. carotovora).